Consider the following 104-residue polypeptide: Cell division protein FtsL (104 aa).

The Cytoplasmic segment spans residues methionine 1 to histidine 19. A helical transmembrane segment spans residues phenylalanine 20 to threonine 39. Topologically, residues threonine 40–arginine 104 are periplasmic.

This sequence belongs to the FtsL family. In terms of assembly, part of a complex composed of FtsB, FtsL and FtsQ.

Its subcellular location is the cell inner membrane. Functionally, essential cell division protein. May link together the upstream cell division proteins, which are predominantly cytoplasmic, with the downstream cell division proteins, which are predominantly periplasmic. The polypeptide is Cell division protein FtsL (Psychromonas ingrahamii (strain DSM 17664 / CCUG 51855 / 37)).